A 456-amino-acid polypeptide reads, in one-letter code: Bifunctional protein GlmU (456 aa).

The segment at 1–229 (MLNNAMSVVI…LSEVEGVNNR (229 aa)) is pyrophosphorylase. UDP-N-acetyl-alpha-D-glucosamine is bound by residues 11-14 (LAAG), Lys-25, Gln-76, 81-82 (GT), 103-105 (YGD), Gly-140, Glu-154, Asn-169, and Asn-227. Asp-105 contributes to the Mg(2+) binding site. Asn-227 is a binding site for Mg(2+). Positions 230–250 (LQLSRLERVYQFEQAEKLLLA) are linker. Positions 251 to 456 (GVMLRDPARF…EGWRRPVKKK (206 aa)) are N-acetyltransferase. Positions 333 and 351 each coordinate UDP-N-acetyl-alpha-D-glucosamine. His-363 acts as the Proton acceptor in catalysis. 2 residues coordinate UDP-N-acetyl-alpha-D-glucosamine: Tyr-366 and Asn-377. Acetyl-CoA is bound by residues Ala-380, 386 to 387 (NY), Ser-405, Ala-423, and Arg-440.

This sequence in the N-terminal section; belongs to the N-acetylglucosamine-1-phosphate uridyltransferase family. In the C-terminal section; belongs to the transferase hexapeptide repeat family. As to quaternary structure, homotrimer. Mg(2+) is required as a cofactor.

Its subcellular location is the cytoplasm. The catalysed reaction is alpha-D-glucosamine 1-phosphate + acetyl-CoA = N-acetyl-alpha-D-glucosamine 1-phosphate + CoA + H(+). It carries out the reaction N-acetyl-alpha-D-glucosamine 1-phosphate + UTP + H(+) = UDP-N-acetyl-alpha-D-glucosamine + diphosphate. It participates in nucleotide-sugar biosynthesis; UDP-N-acetyl-alpha-D-glucosamine biosynthesis; N-acetyl-alpha-D-glucosamine 1-phosphate from alpha-D-glucosamine 6-phosphate (route II): step 2/2. The protein operates within nucleotide-sugar biosynthesis; UDP-N-acetyl-alpha-D-glucosamine biosynthesis; UDP-N-acetyl-alpha-D-glucosamine from N-acetyl-alpha-D-glucosamine 1-phosphate: step 1/1. Its pathway is bacterial outer membrane biogenesis; LPS lipid A biosynthesis. Catalyzes the last two sequential reactions in the de novo biosynthetic pathway for UDP-N-acetylglucosamine (UDP-GlcNAc). The C-terminal domain catalyzes the transfer of acetyl group from acetyl coenzyme A to glucosamine-1-phosphate (GlcN-1-P) to produce N-acetylglucosamine-1-phosphate (GlcNAc-1-P), which is converted into UDP-GlcNAc by the transfer of uridine 5-monophosphate (from uridine 5-triphosphate), a reaction catalyzed by the N-terminal domain. The sequence is that of Bifunctional protein GlmU from Escherichia coli O7:K1 (strain IAI39 / ExPEC).